The chain runs to 121 residues: Large ribosomal subunit protein bL12 (121 aa).

The protein belongs to the bacterial ribosomal protein bL12 family. As to quaternary structure, homodimer. Part of the ribosomal stalk of the 50S ribosomal subunit. Forms a multimeric L10(L12)X complex, where L10 forms an elongated spine to which 2 to 4 L12 dimers bind in a sequential fashion. Binds GTP-bound translation factors.

Its function is as follows. Forms part of the ribosomal stalk which helps the ribosome interact with GTP-bound translation factors. Is thus essential for accurate translation. This chain is Large ribosomal subunit protein bL12, found in Leuconostoc citreum (strain KM20).